A 223-amino-acid chain; its full sequence is Killer cell lectin-like receptor subfamily B member 1B allele C (223 aa).

At 1 to 45 (MDTAVVYADLHLARTGEPKRESPPSLSPDTCQCPRWHRLALKLGC) the chain is on the cytoplasmic side. Positions 5-10 (VVYADL) match the ITIM motif motif. Positions 31 to 34 (CQCP) match the LCK-binding motif motif. A helical; Signal-anchor for type II membrane protein transmembrane segment spans residues 46–66 (ACFILLVLSVIGLGVLVLTLL). The Extracellular portion of the chain corresponds to 67–223 (QKPLLQNSPA…LKRESTCNDS (157 aa)). The 111-residue stretch at 101–211 (HRDKCFHVSQ…CDSDNIWICQ (111 aa)) folds into the C-type lectin domain. Disulfide bonds link Cys-122-Cys-210 and Cys-189-Cys-202.

Homodimer; disulfide-linked. Interacts with tyrosine kinase LCK. Binds PTPN6/SHP-1 in a phosphorylation-dependent manner. As to expression, expressed in a subset of natural killer cells.

It localises to the membrane. Receptor for CLEC2D/OCIL. Ligand-binding contributes to inhibition of cytotoxic natural killer (NK) cells. May mediate MHC class I-independent 'missing-self' recognition of allografts, tumor cells and virus-infected cells. The sequence is that of Killer cell lectin-like receptor subfamily B member 1B allele C from Rattus norvegicus (Rat).